A 77-amino-acid chain; its full sequence is Large ribosomal subunit protein bL28 (77 aa).

It belongs to the bacterial ribosomal protein bL28 family.

The protein is Large ribosomal subunit protein bL28 of Verminephrobacter eiseniae (strain EF01-2).